The following is a 523-amino-acid chain: Na(+)/H(+) antiporter NhaB (523 aa).

Helical transmembrane passes span 28-48 (FLIINPFIVALNPFVAGWLLV), 51-71 (FIFTLSMALKCYPLLPGGLLA), 89-109 (LSANLEVLLLLMFMVAGIYFV), 137-157 (MAAFLSAFLDALTVVAVVISI), 237-257 (FFIRMSAVSIPVLICGLATCV), 302-322 (AIICVWLIVGLAFHLAAVGLI), 347-367 (TESLPFTALLSVFFVVVAVII), 390-410 (LFYIANGVLSMVSDNVFVGTV), 445-465 (VATPNGQAAFLFLLTSTLAPL), and 476-496 (MALPYTIVLAGVGLLSTMYLL).

Belongs to the NhaB Na(+)/H(+) (TC 2.A.34) antiporter family.

The protein resides in the cell inner membrane. The enzyme catalyses 2 Na(+)(in) + 3 H(+)(out) = 2 Na(+)(out) + 3 H(+)(in). Its function is as follows. Na(+)/H(+) antiporter that extrudes sodium in exchange for external protons. The sequence is that of Na(+)/H(+) antiporter NhaB from Tolumonas auensis (strain DSM 9187 / NBRC 110442 / TA 4).